The following is a 107-amino-acid chain: Colipase (107 aa).

An N-terminal signal peptide occupies residues 1 to 17; it reads MEKVLVLLLVALSVAYA. Positions 18–22 are cleaved as a propeptide — enterostatin, activation peptide; it reads APGPR. 5 cysteine pairs are disulfide-bonded: Cys-34-Cys-45, Cys-40-Cys-56, Cys-44-Cys-78, Cys-66-Cys-86, and Cys-80-Cys-104.

Belongs to the colipase family. As to quaternary structure, forms a 1:1 stoichiometric complex with pancreatic lipase. In terms of tissue distribution, expressed by the pancreas.

The protein resides in the secreted. Functionally, colipase is a cofactor of pancreatic lipase. It allows the lipase to anchor itself to the lipid-water interface. Without colipase the enzyme is washed off by bile salts, which have an inhibitory effect on the lipase. Enterostatin has a biological activity as a satiety signal. The polypeptide is Colipase (CLPS) (Oryctolagus cuniculus (Rabbit)).